The primary structure comprises 142 residues: Transcriptional regulator MraZ (142 aa).

SpoVT-AbrB domains are found at residues 5 to 51 (ASAL…PRPE) and 77 to 120 (AADV…DAAT).

It belongs to the MraZ family. In terms of assembly, forms oligomers.

The protein resides in the cytoplasm. Its subcellular location is the nucleoid. The sequence is that of Transcriptional regulator MraZ from Cupriavidus pinatubonensis (strain JMP 134 / LMG 1197) (Cupriavidus necator (strain JMP 134)).